Consider the following 88-residue polypeptide: Cytochrome c oxidase assembly factor 3, mitochondrial (88 aa).

Topologically, residues 1-32 (MGKLVGAPKGHDRYRDPKTHQITPALYRVRAP) are mitochondrial matrix. The chain crosses the membrane as a helical span at residues 33 to 55 (FFWRNTIALFAVSSIPLAVYLYT). Over 56 to 88 (FKKMGDDDLGDIPIPPISDEELQKLKLEYENQK) the chain is Mitochondrial intermembrane.

The protein belongs to the COA3 family. In terms of assembly, component of 250-400 kDa complexes called cytochrome oxidase assembly intermediates or COA complexes.

Its subcellular location is the mitochondrion inner membrane. Functionally, required for assembly of cytochrome c oxidase (complex IV). In Candida albicans (strain WO-1) (Yeast), this protein is Cytochrome c oxidase assembly factor 3, mitochondrial (COA3).